The chain runs to 779 residues: Lon protease (779 aa).

A Lon N-terminal domain is found at Leu-10–Arg-203. Position 355 to 362 (Gly-355 to Thr-362) interacts with ATP. One can recognise a Lon proteolytic domain in the interval Lys-591 to Lys-772. Catalysis depends on residues Ser-678 and Lys-721.

Belongs to the peptidase S16 family. Homohexamer. Organized in a ring with a central cavity.

The protein localises to the cytoplasm. It carries out the reaction Hydrolysis of proteins in presence of ATP.. Its function is as follows. ATP-dependent serine protease that mediates the selective degradation of mutant and abnormal proteins as well as certain short-lived regulatory proteins. Required for cellular homeostasis and for survival from DNA damage and developmental changes induced by stress. Degrades polypeptides processively to yield small peptide fragments that are 5 to 10 amino acids long. Binds to DNA in a double-stranded, site-specific manner. The chain is Lon protease from Brevibacillus choshinensis.